A 358-amino-acid chain; its full sequence is Mesaconyl-CoA hydratase (358 aa).

Residues Ala44 to Ile148 enclose the MaoC-like domain.

It belongs to the enoyl-CoA hydratase/isomerase family.

The enzyme catalyses (2R,3S)-beta-methylmalyl-CoA = 2-methylfumaryl-CoA + H2O. Its function is as follows. Involved in the methylaspartate cycle. Catalyzes the reversible hydration of mesaconyl-CoA (2-methylfumaryl-CoA) to yield beta-methylmalyl-CoA ((2R,3S)-beta-methylmalyl-CoA). This chain is Mesaconyl-CoA hydratase, found in Haloarcula marismortui (strain ATCC 43049 / DSM 3752 / JCM 8966 / VKM B-1809) (Halobacterium marismortui).